A 551-amino-acid chain; its full sequence is Chaperonin GroEL (551 aa).

Residues 30-33, Lys-51, 87-91, Gly-415, 479-481, and Asp-495 each bind ATP; these read TLGP, DGTTT, and NAA.

The protein belongs to the chaperonin (HSP60) family. As to quaternary structure, forms a cylinder of 14 subunits composed of two heptameric rings stacked back-to-back. Interacts with the co-chaperonin GroES.

It is found in the cytoplasm. The enzyme catalyses ATP + H2O + a folded polypeptide = ADP + phosphate + an unfolded polypeptide.. Together with its co-chaperonin GroES, plays an essential role in assisting protein folding. The GroEL-GroES system forms a nano-cage that allows encapsulation of the non-native substrate proteins and provides a physical environment optimized to promote and accelerate protein folding. In Acidithiobacillus ferrooxidans (strain ATCC 23270 / DSM 14882 / CIP 104768 / NCIMB 8455) (Ferrobacillus ferrooxidans (strain ATCC 23270)), this protein is Chaperonin GroEL.